The chain runs to 2098 residues: 1-phosphatidylinositol 3-phosphate 5-kinase (2098 aa).

The segment at 1-45 (MATDDKTSPTLDSANDLPRSPTSPSHLTHFKPLTPDQDEPPFKSA) is disordered. N-acetylalanine is present on alanine 2. Phosphoserine; by autocatalysis is present on residues serine 23 and serine 48. A disordered region spans residues 57–123 (KERAEGGQGE…EPTFGGHDPR (67 aa)). The segment covering 66-88 (EQQPLSGSWTSPQLPSRTQSVRS) has biased composition (polar residues). Serine 88 bears the Phosphoserine mark. An FYVE-type zinc finger spans residues 158–218 (DSQCKECYDC…ACTYCRKIAL (61 aa)). Cysteine 164, cysteine 167, cysteine 180, cysteine 183, cysteine 188, cysteine 191, cysteine 210, and cysteine 213 together coordinate Zn(2+). Residues 292–329 (VQEDAGKSPARNRSASITNLSLDRSGSPMVPSYETSVS) are disordered. 3 positions are modified to phosphoserine: serine 299, serine 307, and serine 312. Residues 302-315 (RNRSASITNLSLDR) are compositionally biased toward polar residues. Serine 318 is subject to Phosphoserine; by PKB/AKT1 or PKB/AKT2. Serine 329 carries the phosphoserine modification. Residues 365–440 (HSSGMEFQDH…DEYALYRPLQ (76 aa)) form the DEP domain. Residues 442–459 (TEFSETPSPDSDSVNSVE) show a composition bias toward polar residues. The interval 442-469 (TEFSETPSPDSDSVNSVEGHSEPSWFKD) is disordered. Basic and acidic residues predominate over residues 460 to 469 (GHSEPSWFKD). A Phosphoserine modification is found at serine 475. A disordered region spans residues 484–505 (GDDNLANSASPSKRTSVSSFQS). Residues 488–505 (LANSASPSKRTSVSSFQS) show a composition bias toward polar residues. Positions 616 to 868 (MMALLQQLLH…MICVAYHSQL (253 aa)) are chaperonin-like domain. 2 disordered regions span residues 1161–1191 (RIQP…NEGD) and 1512–1616 (FQQE…STDS). The segment covering 1177-1186 (SSTSSGQSGS) has biased composition (low complexity). Serine 1522 is subject to Phosphoserine; by autocatalysis. Serine 1544 and serine 1549 each carry phosphoserine. Residues 1562–1578 (LTTLSSQSSTSSTHLQL) are compositionally biased toward low complexity. Position 1669 is a phosphoserine; by autocatalysis (serine 1669). The segment at 1692–1799 (QWNSAEEGLP…PQDEVDGGDT (108 aa)) is disordered. Over residues 1704–1714 (STSDSRPKSSS) the composition is skewed to low complexity. Positions 1723–1735 (GGQTNRTTETEPQ) are enriched in polar residues. The residue at position 1754 (serine 1754) is a Phosphoserine. The PIPK domain occupies 1758-2084 (SSQKRETLRG…RFCEAMDKYF (327 aa)). The interval 1842-2098 (EEDFIRSLSH…DHWTGLGLNC (257 aa)) is catalytic. Residues serine 1969 and serine 2053 each carry the phosphoserine; by autocatalysis modification.

Component of the PI(3,5)P2 regulatory complex/PAS complex, at least composed of PIKFYVE, FIG4 and VAC14. VAC14 nucleates the assembly of the complex and serves as a scaffold by pentamerizing into a star-shaped structure, which can bind a single copy each of PIKFYVE and FIG4 and coordinates their activities. Interacts (via chaperonin-like domain) with RABEPK; the interaction recruits RABEPK to the endosomal membrane. Interacts with SPAG9. Interacts with EGFR. Post-translationally, autophosphorylates which inhibits its own phosphatidylinositol 3-phosphate 5-kinase activity, stimulates FIG4 lipid phosphatase activity and down-regulates lipid product formation. Dephosphorylated by FIG4 in the PI(3,5)P2 regulatory complex, at Ser-48, Ser-1669 and Ser-2053. Phosphorylated in response to insulin at Ser-318 in a protein kinase B (PKB)-dependent manner.

The protein localises to the endosome membrane. It localises to the early endosome membrane. The protein resides in the cytoplasmic vesicle. It is found in the phagosome membrane. Its subcellular location is the late endosome membrane. The catalysed reaction is a 1,2-diacyl-sn-glycero-3-phospho-(1D-myo-inositol-3-phosphate) + ATP = a 1,2-diacyl-sn-glycero-3-phospho-(1D-myo-inositol-3,5-bisphosphate) + ADP + H(+). The enzyme catalyses a 1,2-diacyl-sn-glycero-3-phospho-(1D-myo-inositol) + ATP = a 1,2-diacyl-sn-glycero-3-phospho-(1D-myo-inositol-5-phosphate) + ADP + H(+). It catalyses the reaction L-seryl-[protein] + ATP = O-phospho-L-seryl-[protein] + ADP + H(+). With respect to regulation, inhibited by apilimod and YM201636. In terms of biological role, dual specificity kinase implicated in myriad essential cellular processes such as maintenance of endomembrane homeostasis, and endocytic-vacuolar pathway, lysosomal trafficking, nuclear transport, stress- or hormone-induced signaling and cell cycle progression. The PI(3,5)P2 regulatory complex regulates both the synthesis and turnover of phosphatidylinositol 3,5-bisphosphate (PtdIns(3,5)P2). Sole enzyme to catalyze the phosphorylation of phosphatidylinositol 3-phosphate on the fifth hydroxyl of the myo-inositol ring, to form (PtdIns(3,5)P2). Also catalyzes the phosphorylation of phosphatidylinositol on the fifth hydroxyl of the myo-inositol ring, to form phosphatidylinositol 5-phosphate (PtdIns(5)P). Has serine-protein kinase activity and is able to autophosphorylate and transphosphorylate. Autophosphorylation inhibits its own phosphatidylinositol 3-phosphate 5-kinase activity, stimulates FIG4 lipid phosphatase activity and down-regulates lipid product formation. Involved in key endosome operations such as fission and fusion in the course of endosomal cargo transport. Required for the maturation of early into late endosomes, phagosomes and lysosomes. Regulates vacuole maturation and nutrient recovery following engulfment of macromolecules, initiates the redistribution of accumulated lysosomal contents back into the endosome network. Critical regulator of the morphology, degradative activity, and protein turnover of the endolysosomal system in macrophages and platelets. In neutrophils, critical to perform chemotaxis, generate ROS, and undertake phagosome fusion with lysosomes. Plays a key role in the processing and presentation of antigens by major histocompatibility complex class II (MHC class II) mediated by CTSS. Regulates melanosome biogenesis by controlling the delivery of proteins from the endosomal compartment to the melanosome. Essential for systemic glucose homeostasis, mediates insulin-induced signals for endosome/actin remodeling in the course of GLUT4 translocation/glucose uptake activation. Supports microtubule-based endosome-to-trans-Golgi network cargo transport, through association with SPAG9 and RABEPK. Mediates EGFR trafficking to the nucleus. (Microbial infection) Required for cell entry of coronaviruses SARS-CoV and SARS-CoV-2, as well as human coronavirus EMC (HCoV-EMC) by endocytosis. The protein is 1-phosphatidylinositol 3-phosphate 5-kinase of Homo sapiens (Human).